Consider the following 174-residue polypeptide: Streptothricin acetyltransferase (174 aa).

The N-acetyltransferase domain occupies 20 to 170; that stretch reads FIVREVFDVH…AMYWYWFSGA (151 aa).

The protein belongs to the acetyltransferase family. GNAT subfamily.

The catalysed reaction is streptothricin F + acetyl-CoA = N(beta)-acetylstreptothricin F + CoA + H(+). Involved in resistance to streptothricin, a broad-spectrum antibiotic produced by streptomycetes. Detoxifies streptothricin via acetylation of the beta amino group of the first beta-lysyl moiety of streptothricin. This Escherichia coli protein is Streptothricin acetyltransferase (sat-1).